Consider the following 289-residue polypeptide: 4-hydroxy-tetrahydrodipicolinate synthase (289 aa).

Residue Thr-43 coordinates pyruvate. Tyr-131 (proton donor/acceptor) is an active-site residue. Catalysis depends on Lys-160, which acts as the Schiff-base intermediate with substrate. Position 200 (Val-200) interacts with pyruvate.

This sequence belongs to the DapA family. Homotetramer; dimer of dimers.

It localises to the cytoplasm. It carries out the reaction L-aspartate 4-semialdehyde + pyruvate = (2S,4S)-4-hydroxy-2,3,4,5-tetrahydrodipicolinate + H2O + H(+). It participates in amino-acid biosynthesis; L-lysine biosynthesis via DAP pathway; (S)-tetrahydrodipicolinate from L-aspartate: step 3/4. Catalyzes the condensation of (S)-aspartate-beta-semialdehyde [(S)-ASA] and pyruvate to 4-hydroxy-tetrahydrodipicolinate (HTPA). The sequence is that of 4-hydroxy-tetrahydrodipicolinate synthase from Methanococcus maripaludis (strain C7 / ATCC BAA-1331).